A 498-amino-acid chain; its full sequence is Neoxanthin synthase, chloroplastic (498 aa).

Residues methionine 1–threonine 33 constitute a chloroplast transit peptide. The disordered stretch occupies residues proline 16–serine 38. A compositionally biased stretch (polar residues) spans isoleucine 22–threonine 33. Position 84–112 (valine 84–proline 112) interacts with NAD(+).

This sequence belongs to the lycopene cyclase family.

The protein resides in the plastid. It is found in the chloroplast. It carries out the reaction all-trans-violaxanthin = all-trans-neoxanthin. It participates in carotenoid biosynthesis; neoxanthin biosynthesis. Functionally, involved in the synthesis of neoxanthin, the last product of carotenoid synthesis and a precursor of abscisic acid. This is Neoxanthin synthase, chloroplastic (NXS) from Solanum tuberosum (Potato).